A 74-amino-acid polypeptide reads, in one-letter code: Peptide Im-4 (74 aa).

The N-terminal stretch at 1 to 22 is a signal peptide; it reads MKFQYLLAIFMIVLVVTDHCQA. Position 39 is a lysine amide; partial (Lys-39). Positions 40–74 are excised as a propeptide; that stretch reads GRRRRQLEARYEPQQRNFRKREIDFEKLFANMPDY.

The protein belongs to the non-disulfide-bridged peptide (NDBP) superfamily. Short antimicrobial peptide (group 4) family. Expressed by the venom gland.

It localises to the secreted. Its subcellular location is the target cell membrane. Its function is as follows. Antimicrobial peptide that probably forms pores in target membranes. Has antibacterial activity against Gram-positive bacteria S.aureus NBRC 13276 (MIC=5-10 uM) and B.subtilis NBRC 3009 (MIC=2.5-5 uM) but not against Gram-negative bacterium E.coli NBRC 3972. This Isometrus maculatus (Lesser brown scorpion) protein is Peptide Im-4.